Here is a 103-residue protein sequence, read N- to C-terminus: N(4)-acetylcytidine amidohydrolase (103 aa).

Residues 6–100 (ITFFQRFQED…AEDRFYVIEF (95 aa)) enclose the ASCH domain. Lys21 acts as the Proton acceptor in catalysis. Residue Thr24 is the Nucleophile of the active site. Glu74 serves as the catalytic Proton donor.

This sequence belongs to the N(4)-acetylcytidine amidohydrolase family.

The enzyme catalyses N(4)-acetylcytidine + H2O = cytidine + acetate + H(+). The catalysed reaction is N(4)-acetyl-2'-deoxycytidine + H2O = 2'-deoxycytidine + acetate + H(+). It catalyses the reaction N(4)-acetylcytosine + H2O = cytosine + acetate + H(+). Catalyzes the hydrolysis of N(4)-acetylcytidine (ac4C). In Klebsiella pneumoniae (strain 342), this protein is N(4)-acetylcytidine amidohydrolase.